Here is a 93-residue protein sequence, read N- to C-terminus: Small ribosomal subunit protein uS19 (93 aa).

Belongs to the universal ribosomal protein uS19 family.

Functionally, protein S19 forms a complex with S13 that binds strongly to the 16S ribosomal RNA. The chain is Small ribosomal subunit protein uS19 from Nautilia profundicola (strain ATCC BAA-1463 / DSM 18972 / AmH).